The following is a 703-amino-acid chain: Elongation factor G (703 aa).

A tr-type G domain is found at 10–286; sequence NKVRNIGIMA…AVVKFLPSPL (277 aa). Residues 19–26, 83–87, and 137–140 contribute to the GTP site; these read AHIDAGKT, DTPGH, and NKLD.

Belongs to the TRAFAC class translation factor GTPase superfamily. Classic translation factor GTPase family. EF-G/EF-2 subfamily.

The protein resides in the cytoplasm. Its function is as follows. Catalyzes the GTP-dependent ribosomal translocation step during translation elongation. During this step, the ribosome changes from the pre-translocational (PRE) to the post-translocational (POST) state as the newly formed A-site-bound peptidyl-tRNA and P-site-bound deacylated tRNA move to the P and E sites, respectively. Catalyzes the coordinated movement of the two tRNA molecules, the mRNA and conformational changes in the ribosome. In Nocardioides sp. (strain ATCC BAA-499 / JS614), this protein is Elongation factor G.